Reading from the N-terminus, the 559-residue chain is Protein GRAVITROPIC IN THE LIGHT 1 (559 aa).

The disordered stretch occupies residues 107–127 (AVNRREEYDTEEEENEEEGEI). The span at 114–127 (YDTEEEENEEEGEI) shows a compositional bias: acidic residues.

Functionally, required for red (R) and far red (FR) light-induced and phytochrome-mediated deregulation of negative gravitropism leading to randomization of hypocotyl growth orientation. The chain is Protein GRAVITROPIC IN THE LIGHT 1 from Arabidopsis thaliana (Mouse-ear cress).